Consider the following 296-residue polypeptide: Maltose/maltodextrin transport system permease protein MalG (296 aa).

Residues 1-12 (MAMVQPKSQKLR) lie on the Cytoplasmic side of the membrane. A helical transmembrane segment spans residues 13–35 (LLITHLGLLIFIAAIMFPLLMVI). The Periplasmic portion of the chain corresponds to 36–88 (AISLREGNFATGSLIPDKISWEHWRLALGFSVEHADGRVTPPPFPVLLWLWNS). An ABC transmembrane type-1 domain is found at 85–281 (LWNSVKIAGI…IPITLVFLLA (197 aa)). Residues 89–111 (VKIAGITAIGIVALSTTCAYAFA) form a helical membrane-spanning segment. Topologically, residues 112–123 (RMRFPGKATLLK) are cytoplasmic. Residues 124–143 (GMLIFQMFPAVLSLVALYAL) form a helical membrane-spanning segment. The Periplasmic portion of the chain corresponds to 144-152 (FDRLGQYIP). Residues 153–175 (FIGLNTHGGVIFAYLGGIALHVW) form a helical membrane-spanning segment. Residues 176–204 (TIKGYFETIDSSLEEAAALDGATPWQAFR) lie on the Cytoplasmic side of the membrane. A helical transmembrane segment spans residues 205–227 (LVLLPLSVPILAVVFILSFIAAI). Topologically, residues 228-257 (TEVPVASLLLRDVDSYTLAVGMQQYLNPQN) are periplasmic. The helical transmembrane segment at 258–280 (YLWGDFAAAAVLSAIPITLVFLL) threads the bilayer. Topologically, residues 281–296 (AQRWLVNGLTAGGVKG) are cytoplasmic.

Belongs to the binding-protein-dependent transport system permease family. MalFG subfamily. In terms of assembly, the complex is composed of two ATP-binding proteins (MalK), two transmembrane proteins (MalG and MalF) and a solute-binding protein (MalE).

It is found in the cell inner membrane. In terms of biological role, part of the ABC transporter complex MalEFGK involved in maltose/maltodextrin import. Probably responsible for the translocation of the substrate across the membrane. In Salmonella typhimurium (strain LT2 / SGSC1412 / ATCC 700720), this protein is Maltose/maltodextrin transport system permease protein MalG (malG).